We begin with the raw amino-acid sequence, 225 residues long: NAD(P)H-quinone oxidoreductase subunit K, chloroplastic (225 aa).

Residues C43, C44, C108, and C139 each coordinate [4Fe-4S] cluster.

The protein belongs to the complex I 20 kDa subunit family. As to quaternary structure, NDH is composed of at least 16 different subunits, 5 of which are encoded in the nucleus. It depends on [4Fe-4S] cluster as a cofactor.

It localises to the plastid. The protein localises to the chloroplast thylakoid membrane. It carries out the reaction a plastoquinone + NADH + (n+1) H(+)(in) = a plastoquinol + NAD(+) + n H(+)(out). The catalysed reaction is a plastoquinone + NADPH + (n+1) H(+)(in) = a plastoquinol + NADP(+) + n H(+)(out). Its function is as follows. NDH shuttles electrons from NAD(P)H:plastoquinone, via FMN and iron-sulfur (Fe-S) centers, to quinones in the photosynthetic chain and possibly in a chloroplast respiratory chain. The immediate electron acceptor for the enzyme in this species is believed to be plastoquinone. Couples the redox reaction to proton translocation, and thus conserves the redox energy in a proton gradient. In Crucihimalaya wallichii (Rock-cress), this protein is NAD(P)H-quinone oxidoreductase subunit K, chloroplastic.